The following is a 142-amino-acid chain: Negative cofactor 2 complex subunit alpha (142 aa).

A compositionally biased stretch (polar residues) spans 1 to 11; sequence MADQVPVTTQL. The tract at residues 1-43 is disordered; that stretch reads MADQVPVTTQLPPIKPEHEVPLDAGGSPVGNMGTNSNNNNELG. Ser-27 is subject to Phosphoserine. One can recognise a Histone-fold domain in the interval 29–137; the sequence is VGNMGTNSNN…LCVEEGQTQP (109 aa). Ser-141 carries the post-translational modification Phosphoserine.

This sequence belongs to the NC2 alpha/DRAP1 family. As to quaternary structure, component of the NC2 (negative cofactor 2) complex composed of BUR6 and NCB2. The NC2 complex associates with SPT15/TBP. Interacts with SPT15/TBP.

It localises to the nucleus. In terms of biological role, component of the NC2 complex which represses RNA polymerase II transcription through binding to SPT15/TBP and thereby inhibiting the assembly of the preinitiation complex. The NC2 complex may also mediate transcriptional activation from TATA-driven promoters through association with SPT15/TBP. The sequence is that of Negative cofactor 2 complex subunit alpha (BUR6) from Saccharomyces cerevisiae (strain ATCC 204508 / S288c) (Baker's yeast).